Reading from the N-terminus, the 667-residue chain is Homeobox protein 3 (667 aa).

4 disordered regions span residues 44-108 (FFQP…NSSI), 179-232 (NNNN…TVYN), 249-268 (NNNNLNLTNNNNNKNSVNNN), and 331-418 (STNK…YQKQ). Residues 52–63 (LPPPTNQQPQPQ) show a composition bias toward pro residues. Polar residues predominate over residues 75–96 (CNSSFENSPQQPTSPLLISSQT). Positions 97–108 (SYPSDLSSNSSI) are enriched in low complexity. Basic residues predominate over residues 334–343 (KRMKISHHSH). The segment covering 344–379 (SLSNNNENSLSQPYFNNNNNNNNENENVYNIVNEQN) has biased composition (low complexity). Residues 380-390 (PTFNPNQSNTH) are compositionally biased toward polar residues. The stretch at 386 to 454 (QSNTHQQQEE…ENENVICSEF (69 aa)) forms a coiled coil. Positions 602-664 (EFKSRRILSE…NKRMRDKSNK (63 aa)) form a DNA-binding region, homeobox.

It localises to the nucleus. Putative transcription factor. The chain is Homeobox protein 3 (hbx3) from Dictyostelium discoideum (Social amoeba).